We begin with the raw amino-acid sequence, 367 residues long: Alanine racemase (367 aa).

Lys-40 (proton acceptor; specific for D-alanine) is an active-site residue. Lys-40 bears the N6-(pyridoxal phosphate)lysine mark. Arg-136 serves as a coordination point for substrate. Catalysis depends on Tyr-263, which acts as the Proton acceptor; specific for L-alanine. Met-310 is a substrate binding site.

Belongs to the alanine racemase family. Requires pyridoxal 5'-phosphate as cofactor.

The enzyme catalyses L-alanine = D-alanine. It functions in the pathway amino-acid biosynthesis; D-alanine biosynthesis; D-alanine from L-alanine: step 1/1. Functionally, catalyzes the interconversion of L-alanine and D-alanine. May also act on other amino acids. In Streptococcus pneumoniae (strain 70585), this protein is Alanine racemase (alr).